We begin with the raw amino-acid sequence, 309 residues long: Methionyl-tRNA formyltransferase (309 aa).

109-112 (SLLP) lines the (6S)-5,6,7,8-tetrahydrofolate pocket.

Belongs to the Fmt family.

The catalysed reaction is L-methionyl-tRNA(fMet) + (6R)-10-formyltetrahydrofolate = N-formyl-L-methionyl-tRNA(fMet) + (6S)-5,6,7,8-tetrahydrofolate + H(+). In terms of biological role, attaches a formyl group to the free amino group of methionyl-tRNA(fMet). The formyl group appears to play a dual role in the initiator identity of N-formylmethionyl-tRNA by promoting its recognition by IF2 and preventing the misappropriation of this tRNA by the elongation apparatus. This chain is Methionyl-tRNA formyltransferase, found in Clostridium novyi (strain NT).